The sequence spans 512 residues: Maturase K (512 aa).

The protein belongs to the intron maturase 2 family. MatK subfamily.

It localises to the plastid. The protein localises to the chloroplast. Usually encoded in the trnK tRNA gene intron. Probably assists in splicing its own and other chloroplast group II introns. This chain is Maturase K, found in Lilium tsingtauense (Twilight lily).